The sequence spans 224 residues: Small ribosomal subunit protein uS3 (224 aa).

In terms of domain architecture, KH type-2 spans 39–107 (IREFLKKKPS…DVWVEIAEVK (69 aa)).

It belongs to the universal ribosomal protein uS3 family. In terms of assembly, part of the 30S ribosomal subunit. Forms a tight complex with proteins S10 and S14.

In terms of biological role, binds the lower part of the 30S subunit head. Binds mRNA in the 70S ribosome, positioning it for translation. The sequence is that of Small ribosomal subunit protein uS3 from Chlamydia trachomatis serovar L2 (strain ATCC VR-902B / DSM 19102 / 434/Bu).